We begin with the raw amino-acid sequence, 241 residues long: Trypsin-10 (241 aa).

Residues 1-13 (MKSLIFVLLLGAV) form the signal peptide. A propeptide spans 14 to 19 (FAEEDK) (activation peptide). Residues 20-239 (IVGGYECTRH…LSGWVRDTMA (220 aa)) enclose the Peptidase S1 domain. 6 disulfides stabilise this stretch: Cys26/Cys155, Cys44/Cys60, Cys128/Cys228, Cys135/Cys201, Cys166/Cys180, and Cys191/Cys215. Active-site charge relay system residues include His59 and Asp103. Catalysis depends on Ser195, which acts as the Charge relay system.

It belongs to the peptidase S1 family.

The protein localises to the secreted. The protein resides in the extracellular space. It carries out the reaction Preferential cleavage: Arg-|-Xaa, Lys-|-Xaa.. The chain is Trypsin-10 from Gadus morhua (Atlantic cod).